Consider the following 248-residue polypeptide: Tabinhibitin 10 (248 aa).

Positions 1-22 are cleaved as a signal peptide; sequence MTLKRIFCAALALIVLQSVASA. The SCP domain maps to 66–208; sequence LQKTNWLRGV…NYKGAFHCSL (143 aa). The Cell attachment site motif lies at 221 to 223; that stretch reads RGD.

The protein belongs to the CRISP family. Expressed in salivary glands.

It localises to the secreted. Inhibits platelet aggregation induced by all agonists tested (ADP, arachidonic acid, the thromboxane A2 analog U46619, thrombin, and snake venom snaclecs (TMVA that activates platelet through GPIB, and stejnulxin that specifically acts through GPVI (GP6))). May act by competing with fibrinogen for binding to glycoprotein IIb/IIIa (ITGA2B/ITGB3). In Tabanus yao (Horsefly), this protein is Tabinhibitin 10.